The primary structure comprises 211 residues: Thymidylate kinase (211 aa).

Position 7–14 (7–14) interacts with ATP; that stretch reads GIDASGKS.

It belongs to the thymidylate kinase family.

It catalyses the reaction dTMP + ATP = dTDP + ADP. Functionally, phosphorylation of dTMP to form dTDP in both de novo and salvage pathways of dTTP synthesis. The protein is Thymidylate kinase of Mesomycoplasma hyopneumoniae (strain 7448) (Mycoplasma hyopneumoniae).